The sequence spans 251 residues: Probable transcriptional regulatory protein Cpar_0525 (251 aa).

It belongs to the TACO1 family.

The protein localises to the cytoplasm. The chain is Probable transcriptional regulatory protein Cpar_0525 from Chlorobaculum parvum (strain DSM 263 / NCIMB 8327) (Chlorobium vibrioforme subsp. thiosulfatophilum).